The sequence spans 1238 residues: Inner capsid protein VP2 (1238 aa).

A disordered region spans residues 1 to 35 (MSTSAKKTPESKTEDKIEPVIEQTSNDKPEPPPNK). The span at 7–30 (KTPESKTEDKIEPVIEQTSNDKPE) shows a compositional bias: basic and acidic residues.

It belongs to the turreted BTV-fold inner capsid family. Homodecamer; each decamer is made up of two conformers of VP2, called VP2A and VP2B. 12 homodecamers assemble to form an icosahedral capsid.

The protein localises to the virion. In terms of biological role, inner capsid protein that self-assembles to form an icosahedral capsid with a T=2 symmetry, which consists of 120 copies of VP2, with channels at each of its five-fold vertices. This capsid constitutes the innermost concentric layer of the viral mature particle. This is Inner capsid protein VP2 (S2) from Cryphonectria parasitica (Chestnut blight fungus).